The chain runs to 186 residues: Elongation factor P (186 aa).

The protein belongs to the elongation factor P family.

Its subcellular location is the cytoplasm. It participates in protein biosynthesis; polypeptide chain elongation. Functionally, involved in peptide bond synthesis. Stimulates efficient translation and peptide-bond synthesis on native or reconstituted 70S ribosomes in vitro. Probably functions indirectly by altering the affinity of the ribosome for aminoacyl-tRNA, thus increasing their reactivity as acceptors for peptidyl transferase. The polypeptide is Elongation factor P (Shewanella frigidimarina (strain NCIMB 400)).